The chain runs to 473 residues: Photosystem II CP43 reaction center protein (473 aa).

A propeptide spanning residues 1–14 is cleaved from the precursor; sequence MKNLYSLRRFYHVE. The residue at position 15 (Thr15) is an N-acetylthreonine. Residue Thr15 is modified to Phosphothreonine. The next 5 membrane-spanning stretches (helical) occupy residues 69-93, 134-155, 178-200, 255-275, and 291-312; these read LFEVAHFVPEKPMYEQGLILLPHLA, LIGPETLEESFPFFGYVWKDKN, KARYLGGVYDTWAPGGGDVRVIT, KPFGWARRAFVWSGEAYLSYS, and WFNNTVYPSEFYGPTGPEASQA. Glu367 contacts [CaMn4O5] cluster. Residues 447 to 471 traverse the membrane as a helical segment; it reads RARAAAAGFEKGIDRDTEPTLFMRP.

Belongs to the PsbB/PsbC family. PsbC subfamily. As to quaternary structure, PSII is composed of 1 copy each of membrane proteins PsbA, PsbB, PsbC, PsbD, PsbE, PsbF, PsbH, PsbI, PsbJ, PsbK, PsbL, PsbM, PsbT, PsbX, PsbY, PsbZ, Psb30/Ycf12, at least 3 peripheral proteins of the oxygen-evolving complex and a large number of cofactors. It forms dimeric complexes. Binds multiple chlorophylls and provides some of the ligands for the Ca-4Mn-5O cluster of the oxygen-evolving complex. It may also provide a ligand for a Cl- that is required for oxygen evolution. PSII binds additional chlorophylls, carotenoids and specific lipids. serves as cofactor.

It is found in the plastid. The protein localises to the chloroplast thylakoid membrane. Functionally, one of the components of the core complex of photosystem II (PSII). It binds chlorophyll and helps catalyze the primary light-induced photochemical processes of PSII. PSII is a light-driven water:plastoquinone oxidoreductase, using light energy to abstract electrons from H(2)O, generating O(2) and a proton gradient subsequently used for ATP formation. The chain is Photosystem II CP43 reaction center protein from Nephroselmis olivacea (Green alga).